A 491-amino-acid chain; its full sequence is Glutamate--tRNA ligase (491 aa).

The 'HIGH' region signature appears at 13–23; sequence PSPTGFLHIGN. The Zn(2+) site is built by Cys-110, Cys-112, Cys-137, and His-139. Positions 254–258 match the 'KMSKS' region motif; that stretch reads KLSKR. Lys-257 provides a ligand contact to ATP.

It belongs to the class-I aminoacyl-tRNA synthetase family. Glutamate--tRNA ligase type 1 subfamily. In terms of assembly, monomer. The cofactor is Zn(2+).

It is found in the cytoplasm. The enzyme catalyses tRNA(Glu) + L-glutamate + ATP = L-glutamyl-tRNA(Glu) + AMP + diphosphate. In terms of biological role, catalyzes the attachment of glutamate to tRNA(Glu) in a two-step reaction: glutamate is first activated by ATP to form Glu-AMP and then transferred to the acceptor end of tRNA(Glu). This Listeria monocytogenes serovar 1/2a (strain ATCC BAA-679 / EGD-e) protein is Glutamate--tRNA ligase.